The sequence spans 398 residues: MAKKSVANLTEADLSGKRVFVRVDFNVPLNESGVITDDTRIRAALPTIKYLTEKGAKVILGSHMGRPKGQVVDSMRLTPVAARLSELLGQSVTKCDDCVGDAVNQAIANLGNGQVALLENLRFNPGEEKNDPEFAKQLAANADIYVNDAFGTAHRAHGSTEGVTHHVDTSVAGLLIEKELQFLKGAIEAPKRPLVAIVGGSKVSSKIGVIETLLEKCDKLLIGGGMIFTFYKAQGKSVGGSLVEDDKIDLAKSLMEKAQGKILLPTDVIVADKFAPDAEAKTVSVDAIPDGWMGLDIGADSVKVFQEALDGCGTAIWNGPMGVFEFDKFAVGTEAIAKTLAGATETGTVTIIGGGDSVAAVEKVGVADKMSHISTGGGASLELLEGKELPGIVALDDA.

Substrate-binding positions include 24–26 (DFN), Arg-40, 63–66 (HMGR), Arg-122, and Arg-155. ATP contacts are provided by residues Lys-206, Gly-294, Glu-325, and 354-357 (GGDS).

Belongs to the phosphoglycerate kinase family. Monomer.

It is found in the cytoplasm. The catalysed reaction is (2R)-3-phosphoglycerate + ATP = (2R)-3-phospho-glyceroyl phosphate + ADP. It participates in carbohydrate degradation; glycolysis; pyruvate from D-glyceraldehyde 3-phosphate: step 2/5. In Picosynechococcus sp. (strain ATCC 27264 / PCC 7002 / PR-6) (Agmenellum quadruplicatum), this protein is Phosphoglycerate kinase.